A 7119-amino-acid polypeptide reads, in one-letter code: MLSKASVTTQGARGKYRAELYNEKRSDHVACTVPLCDTDDMACKLTPWFEDGETAFNQVSSILKEKGKILFVPMHMQRAMKFLPGPRVYLVERLTGGMLSKHFLVNQLAYKDQVGAAMMRTTLNAKPLGMFFPYDSSLETGEYTFLLRKNGLGGQLFRERPWDRKETPYVEILDDLEADPTGKYSQNLLKKLIGGDCIPIDQYMCGKNGKPIADYAKIVAKEGLTTLADIEVDVKSRMDSDRFIVLNKKLYRVVWNVTRRNVPYPKQTAFTIVSVVQCDDKDSVPEHTFTIGSQILMVSPLKATNNKNFNLKQRLLYTFYGKDAVQQPGYIYHSAYVDCNACGRGTWCTGNAIQGFACDCGANYSANDVDLQSSGLVPRNALFLANCPCANNGACSHSAAQVYNILDGKACVEVGGKSFTLTFGGVVYAYMGCCDGTMYFVPRAKSCVSRIGDAIFTGCTGTWDKVVETANLFLEKAQRSLNFCQQFALTEVVLAILSGTTSTFEELRDLCHNASYEKVRDHLVNHGFVVTIGDYIRDAINIGANGVCNATINAPFIAFTGLGESFKKVSAIPWKICSNLKSALDYYSSNIMFRVFPYDIPCDVSNFVELLLDCGKLTVATSYFVLRYLDEKFDTVLGTVSSACQTALSSFLNACVAASRATAGFINDMFKLFKVLMHKLYVYTSCGYVAVAEHSSKIVQQVLDIMSKAMKLLHTNVSWAGTKLSAIIYEGREALLFNSGTYFCLSTKAKTLQGQMNLVLPGDYNKKTLGILDPVPNADTIDVNANSTVVDVVHGQLEPTNEHGPSMIVGNYVLVSDKLFVRTEDEEFYPLCTNGKVVSTLFRLKGGMPSKKVTFGDVNTVEVTAYRSVSITYDIHPVLDALLSSSKLATFTVEKDLLVEDFVDVIKDEVLTLLTPLLRGYDIDGFDVEDFIDVPCYVYNQDGDCAWSSNMTFSINPVEDVEEVEEFIEDDYLSDELPIADDEEAWARAVEEVMPLDDILVAEIELEEDPPLETALESVEAEVVETAEAQEPSVESIDSTPSTSTVVGENDLSVKPMSRVAETDDVLELETAVVGGPVSDVTAIVTNDIVSVEQAQQCGVSSLPIQDEASENQVHQVSDLQGNELLCSETKVEIVQPRQDLKPRRSRKSKVDLSKYKHTVINNSVTLVLGDAIQIASLLPKCILVNAANRHLKHGGGIAGVINKASGGDVQEESDEYISNNGPLHVGDSVLLKGHGLADAILHVVGPDARNNEDAALLKRCYKAFNKHTIVVTPLISAGIFSVDPKVSFEYLLANVTTTTYVVVNNEDIYNTLATPSKPDGLVYSFEGWRGTVRTAKNYGFTCFICTEYSANVKFLRTKGVDTTKKIQTVDGVSYYLYSARDALTDVIAAANGCSGICAMPFGYVTHGLDLAQSGNYVRQVKVPYVCLLASKEQIPIMNSDVAIQTPETAFINNVTSNGGYHSWHLVSGDLIVKDVCYKKLLHWSGQTICYADNKFYVVKNDVALPFSDLEACRAYLTSRAAQQVNIEVLVTIDGVNFRTVILNDTTTFRKQLGATFYKGVDISDAFPTVKMGGESLFVADNLSESEKVVLKEYYGTSDVTFLQRYYSLQPLVQQWKFVVHDGVKSLKLSNYNCYINATIMMIDMLHDIKFVVPALQNAYLRYKGGDPYDFLALIMAYGDCTFDNPDDEAKLLHTLLAKAELTVSAKMVWREWCTVCGIRDIEYTGMRACVYAGVNSMEELQSVFNETCVCGSVKHRQLVEHSAPWLLVSGLNEVKVSTSTDPIYRAFNVFQGVETSVGHYVHIRVKDGLFYKYDSGSLTKTSDMKCKMTSVWYPTVRYTADCNVVVYDLDGVTKVEVNPDLSNYYMKDGKYYTSKPTIKYSPATILPGSVYSNSCLVGVDGTPGSDTISKFFNDLLGFDETKPISKKLTYSLLPNEDGDVLLSEFSNYNPVYKKGVMLKGKPILWVNNGVCDSALNKPNRASLRQLYDVAPIVLDNKYTVLQDNTSQLVEHNVPVVDDVPITTRKLIEVKCKGLNKPFVKGNFSFVNDPNGVTVVDTLGLTELRALYVDINTRYIVLRDNNWSSLFKLHTVESGDLQIVAAGGSVTRRARVLLGASSLFASFAKITVTATTAACKTAGRGFCKFVVNYGVLQNMFVFLKMLFFLPFNYLWPKKQPTVDIGVSGLRTAGIVTTNIVKQCGTAAYYMLLGKFKRVDWKATLRLFLLLCTTILLLSSIYHLVLFNQVLSSDVMLEDATGILAIYKEVRSYLGIRTLCDGLVVEYRNTSFDVMEFCSNRSVLCQWCLIGQDSLTRYSALQMLQTHITSYVLNIDWIWFALEFFLAYVLYTSSFNVLLLVVTAQYFFAYTSAFVNWRAYNYIVSGLFFLVTHIPLHGLVRVYNFLACLWFLRKFYSHVINGCKDTACLLCYKRNRLTRVEASTIVCGTKRTFYIAANGGTSYCCKHNWNCVECDTAGVGNTFICTEVANDLTTTLRRLIKPTDQSHYYVDSVVVKDAVVELHYNRDGSSCYERYPLCYFTNLEKLKFKEVCKTPTGIPEHNFLIYDTNDRGQENLARSACVYYSQVLCKPMLLVDVNLVTTVGDSREIAIKMLDSFINSFISLFSVSRDKLEKLINTARDCVRRGDDFQNVLKTFTDAARGHAGVESDVETTMVVDALQYAHKNDIQLTTECYNNYVPGYIKPDSINTLDLGCLIDLKAASVNQTSMRNANGACVWNSGDYMKLSDSFKRQIRIACRKCNIPFRLTTSKLRAADNILSVKFSATKIVGGAPSWLLRVRDLTVKGYCILTLFVFTVAVLSWFCLPSYSIATVNFNDDRILTYKVIENGIVRDIAPNDVCFANKYGHFSKWFNENHGGVYRNSMDCPITIAVIAGVAGARVANVPANLAWVGKQIVLFVSRVFANTNVCFTPINEIPYDTFSDSGCVLSSECTLFRDAEGNLNPFCYDPTVLPGASSYADMKPHVRYDMYDSDMYIKFPEVIVESTLRITKTLATQYCRFGSCEESAAGVCISTNGSWALYNQNYSTRPGIYCGDDYFDIVRRLAISLFQPVTYFQLSTSLAMGLVLCVFLTAAFYYINKVKRALADYTQCAVVAVVAALLNSLCLCFIVANPLLVAPYTAMYYYATFYLTGEPAFIMHISWYVMFGAVVPIWMLASYTVGVMLRHLFWVLAYFSKKHVDVFTDGKLNCSFQDAASNIFVIGKDTYVALRNAITQDSFVRYLSLFNKYKYYSGAMDTASYREACAAHLCKALQTYSETGSDILYQPPNCSVTSSVLQSGLVKMSAPSGAVENCIVQVTCGSMTLNGLWLDNTVWCPRHIMCPADQLTDPNYDALLISKTNHSFIVQKHIGAQANLRVVAHSMVGVLLKLTVDVANPSTPAYTFSTVKPGASFSVLACYNGKPTGVFTVNLRHNSTIKGSFLCGSCGSVGYTENGGVINFVYMHQMELSNGTHTGSSFDGVMYGAFEDKQTHQLQLTDKYCTINVVAWLYAAVLNGCKWFVKPTRVGIVTYNEWALSNQFTEFVGTQSIDMLAHRTGVSVEQMLAAIQSLHAGFQGKTILGQSTLEDEFTPDDVNMQVMGVVMQSGVKRISYGFIHWLISTFVLAYVSVMQLTKFTMWTYLFETIPTQMTPLLLGFMACVMFTVKHKHTFMSLFLLPVALCLTYANIVYEPQTLISSTLIAVANWLTPTSVYMRTTHFDFGLYISLSFVLAIIVRRLYRPSMSNLALALCSGVMWFYTYVIGDHSSPITYLMFITTLTSDYTITVFATVNLAKFISGLVFFYAPHLGFILPEVKLVLLIYLGLGYMCTMYFGVFSLLNLKLRVPLGVYDYSVSTQEFRFLTGNGLHAPRNSWEALILNFKLLGIGGTPCIKVATVQSKLTDLKCTSVVLLTVLQQLHLESNSKAWSYCVKLHNEILAAVDPTEAFERFVCLFATLMSFSANVDLDALANDLFENSSVLQATLTEFSHLATYAELETAQSSYQKALNSGDASPQVLKALQKAVNVAKNAYEKDKAVARKLERMAEQAMTSMYKQARAEDKKAKIVSAMQTMLFGMIKKLDNDVLNGVIANARNGCVPLSIVPLCASNKLRVVIPDISVWNKVVNWPSVSYAGSLWDITVINNVDNEVVKPTDVVETNESLTWPLVIECSRSSSSAVKLQNNEIHPKGLKTMVITAGVDQVNCNSSAVAYYEPVQGHRMVMGLLSENAHLKWAKVEGKDGFINIELQPPCKFLIAGPKGPEIRYLYFVKNLNNLHRGQLLGHIAATVRLQAGANTEFASNSTVLTLVAFAVDPAKAYLDYVGSGGTPLSNYVKMLAPKTGTGVAISVKPEATADQETYGGASVCLYCRAHIEHPDVSGVCKYKTRFVQIPAHVRDPVGFLLKNVPCNVCQYWVGYGCNCDALRNNTVPQSKDTNFLNRVRGSSVNARLEPCSSGLTTDVVYRAFDICNFKARVAGIGKYYKTNTCRFVQVDDEGHKLDSYFIVKRHTMSNYELEKRCYDLLKDCDAVAIHDFFIFDVDKTKTPHIVRQSLTEYTMMDLVYALRHFDQNNCEVLKSILVKYGCCEQSYFDNKLWFDFVENPSVIGVYHKLGERIRQAMLNTVKMCDHMVKSGLVGVLTLDNQDLNGKWYDFGDFVITQPGAGVAIVDSYYSYLMPVLSMTNCLAAETHKDCDFNKPLIEWPLLEYDYTDYKIGLFNKYFKYWDQTYHPNCVNCSDDRCILHCANFNVLFSMVLPNTSFGPIVRKIFVDGVPFIVSCGYHYKELGLVMNMDFNIHRHRLALKELMMYAADPAMHIASASALWDLRTPCFSVAALTTGLTFQTVRPGNFNKDFYDFVVSRGFFKEGSSVTLKHFFFAQDGHAAITDYSYYAYNLPTMVDIKQMLFCMEVVDKYFDIYDGGCLNASEVIVNNLDKSAGHPFNKFGKARVYYESMSYQEQDELFAVTKRNVLPTITQMNLKYAISAKNRARTVAGVSILSTMTNRQYHQKMLKSMAATRGATCVIGTTKFYGGWDFMLKTLYKDVESPHLMGWDYPKCDRAMPNMCRILASLILARKHSTCCTNSDRFYRLANECAQVLSEYVLCGGGYYVKPGGTSSGDATTAYANSVFNILQATTANVSALMSANGNTIIDREIKDMQFDLYINVYRKVVPDPKFVDKYYAFLNKHFSMMILSDDGVVCYNSDYAAKGYVASIQNFKETLYYQNNVFMSEAKCWVETNLEKGPHEFCSQHTLYIKDGDDGYFLPYPDPSRILSAGCFVDDIVKTDGTVMMERYVSLAIDAYPLTKHDDTEYQNVFWVYLQYIEKLYKDLTGHMLDSYSVMLCGDDSAKFWEEGFYRDLYSSPTTLQAVGSCVVCHSQTSLRCGTCIRRPFLCCKCCYDHVIATPHKMVLSVSPYVCNAPGCDVSDVTKLYLGGMSYYCNDHRPVCSFPLCANGLVFGLYKNMCTGSSSIMEFNRLATCDWSDSGDYTLANTTTEPLKLFAAETLRATEEASKQSYAIATIKEIVGERELILVWEVGKSKPPLNRNYVFTGYHLTKNSKVQLGEYVFERIDYSDAVSYKSSTTYKLAVGDIFVLTSHSVATLSAPTIVNQERYLKITGIYPTITVPEEFANHVVNFQKAGFSKYVTVQGPPGTGKSHFAIGLAIYYPTARIVYTACSHAAVDALCEKAFKYLNIAKCSRIIPAKARVECYDRFKVNDTNSQYLFSTVNALPEISVDILVVDEVSMCTNYDLSIINSRVKAKHIVYVGDPAQLPAPRTLLIRGTLEPENFNSVTRLMCNLGPDIFLSVCYRCPKEIVSTVSALVYNNKLSAKKDASGQCFKILFKGSVTHDASSAINRPQLNFVKTFIAANPNWSKAVFISPYNSQNAVARSMLGLTTQTVDSSQGSEYPYVIFCQTADTAHANNLNRFNVAVTRAQKGILCVMTSQVLFDSLEFAELSLNNYKLQSQIVTGLFKDCSREDTGLPPAYAPTYLSVDAKYKTTDELCVNLNITPNVTYSRVISRMGFKLDATIPGYPKLFITRDEAIRQVRSWVGFDVEGAHASRNACGTNVPLQLGFSTGVNFVVQPVGVVDTEWGSMLTTISARPPPGEQFKHLVPLMNKGATWPIVRRRIVQMLSDTLDKLSDYCTFVCWAHGFELTSASYFCKIGKEQRCSMCSRRASTFSSPLQSYACWSHSSGYDYVYNPFFVDVQQWGYVGNLATNHDRYCGIHAGAHVASSDAIMTRCLAIYDCFIERVDWDVTYPYISHEQKLNSCCRTVERNVVRSAVLSGKFEKIYDIGNPKGIAIISEPVEWHFYDAQPLSNKVKKLFYTDDVSKQFEDGLCLFWNCNVSKYPSNAVVCRFDTRVHSEFNLPGCNGGSLYVNKHAFHTPAYDINAFRDLKPLPFFYYSTTPCEVHGSGNMLEDIDYVPLKSAVCITACNLGGAVCRKHAAEYRDYMEAYNIVSAAGFRLWVYKTFDIYNLWSTFVKVQGLENIAFNVIKQGHFTGVDGELPVAVVNDKIFTKNGTDDVCIFKNETALPTNVAFELYAKRAVRSHPDLNLLRNLEVDVCYNFVLWDYDRNNIYGTTTIGVCKYTDIDVNPNLNMCFDIRDKGSLERFMSMPNGVLISDRKIKNYPCISGPKHAYFNGAILRNIDAKQPVIFYLYKKVNNEFVSFSDTFYTCGRTVGDFTVLTPMEEDFLVLDSDVFIKKYGLEDYAFEHVVYGDFSHTTLGGLHLLIGLYKKMREGHILMEEMLKDRATVHNYFITDSNTASYKAVCSVIDLRLDDFVTIIKEMDLDVVSKVVKVPIDLTMIEFMLWCRDGKVQTFYPRLQATNDWKPGLTMPSLFKVQQMNLEPCLLANYKQSIPMPNGVHMNVAKYMQLCQYLNTCTLAVPANMRVIHFGAGCEKGVAPGTSVLRQWLPLDAVLIDNDLNEFVSDADITIFGDCVTVHVGQQVDLLISDMYDPCTKAVGEVNQTKALFFVYLCNFIKNNLALGGSVAIKITEHSWSADLYKIMGRFAYWTVFCTNANASSSEGFLIGINFLGELKEEIDGNVMHANYIFWRNSTPMNLSTYSLFDLSRFPLKLKGTPVLQLKESQINELVISLLSQGKLLIRDNDTLNVSTDVLVNFRKRL.

Residues 25 to 151 (RSDHVACTVP…EYTFLLRKNG (127 aa)) enclose the CoV Nsp1 globular domain. Residues 167–195 (TPYVEILDDLEADPTGKYSQNLLKKLIGG) enclose the BetaCoV Nsp1 C-terminal domain. In terms of domain architecture, CoV Nsp2 N-terminal spans 197–472 (CIPIDQYMCG…WDKVVETANL (276 aa)). Zn(2+) is bound by residues Cys339, Cys342, Cys358, and Cys360. The C4 stretch occupies residues 339-360 (CNACGRGTWCTGNAIQGFACDC). One can recognise a CoV Nsp2 middle domain in the interval 478-712 (QRSLNFCQQF…LDIMSKAMKL (235 aa)). Residues 714 to 847 (HTNVSWAGTK…VSTLFRLKGG (134 aa)) enclose the CoV Nsp2 C-terminal domain. Residues 851-960 (KKVTFGDVNT…MTFSINPVED (110 aa)) enclose the Ubiquitin-like 1 domain. Macro domains are found at residues 1152–1321 (DLSK…KPDG) and 1322–1446 (LVYS…AIQT). Positions 1446–1519 (TPETAFINNV…LEACRAYLTS (74 aa)) constitute a DPUP domain. The Ubiquitin-like 2 domain occupies 1524 to 1579 (QVNIEVLVTIDGVNFRTVILNDTTTFRKQLGATFYKGVDISDAFPTVKMGGESLFV). A Peptidase C16 domain is found at 1593–1864 (EYYGTSDVTF…KVEVNPDLSN (272 aa)). Residue Cys1634 is the For PL-PRO activity of the active site. 4 residues coordinate Zn(2+): Cys1714, Cys1717, Cys1749, and Cys1751. The C4-type zinc-finger motif lies at 1714 to 1751 (CTVCGIRDIEYTGMRACVYAGVNSMEELQSVFNETCVC). Residues His1800 and Asp1815 each act as for PL-PRO activity in the active site. The Nucleic acid-binding domain occupies 1878 to 1995 (TIKYSPATIL…QLYDVAPIVL (118 aa)). The region spanning 2012–2133 (HNVPVVDDVP…AKITVTATTA (122 aa)) is the G2M domain. The next 3 membrane-spanning stretches (helical) occupy residues 2112 to 2132 (VLLGASSLFASFAKITVTATT), 2145 to 2165 (FVVNYGVLQNMFVFLKMLFFL), and 2222 to 2242 (LFLLLCTTILLLSSIYHLVLF). The HD1 stretch occupies residues 2112–2395 (VLLGASSLFA…VTHIPLHGLV (284 aa)). The 3Ecto domain occupies 2259 to 2325 (LAIYKEVRSY…LQMLQTHITS (67 aa)). Disulfide bonds link Cys2275/Cys2303 and Cys2293/Cys2300. Transmembrane regions (helical) follow at residues 2326 to 2346 (YVLNIDWIWFALEFFLAYVLY), 2350 to 2370 (FNVLLLVVTAQYFFAYTSAFV), and 2375 to 2395 (YNYIVSGLFFLVTHIPLHGLV). Residues 2409–2499 (KFYSHVINGC…TLRRLIKPTD (91 aa)) form a Y1 region. Positions 2409–2782 (KFYSHVINGC…LSVKFSATKI (374 aa)) constitute a CoV Nsp3 Y domain. The Zn(2+) site is built by His2413, Cys2418, Cys2423, Cys2426, Cys2459, His2462, Cys2466, and Cys2469. A ZF1 region spans residues 2413–2426 (HVINGCKDTACLLC). The interval 2459-2469 (CCKHNWNCVEC) is ZF2. The interval 2500–2598 (QSHYYVDSVV…LVDVNLVTTV (99 aa)) is Y2. Residues 2500 to 2782 (QSHYYVDSVV…LSVKFSATKI (283 aa)) are coV-Y. Residues 2599-2681 (GDSREIAIKM…DALQYAHKND (83 aa)) are Y3. The interval 2682–2782 (IQLTTECYNN…LSVKFSATKI (101 aa)) is Y4. 4 helical membrane-spanning segments follow: residues 2800–2820 (GYCILTLFVFTVAVLSWFCLP), 3072–3092 (STSLAMGLVLCVFLTAAFYYI), 3105–3125 (CAVVAVVAALLNSLCLCFIVA), and 3149–3169 (AFIMHISWYVMFGAVVPIWML). The segment at 2800 to 3169 (GYCILTLFVF…FGAVVPIWML (370 aa)) is HD2. One can recognise a Nsp4C domain in the interval 3195–3291 (VFTDGKLNCS…NCSVTSSVLQ (97 aa)). A Peptidase C30 domain is found at 3292 to 3597 (SGLVKMSAPS…NMQVMGVVMQ (306 aa)). Active-site for 3CL-PRO activity residues include His3332 and Cys3439. The next 7 membrane-spanning stretches (helical) occupy residues 3603–3623 (ISYGFIHWLISTFVLAYVSVM), 3637–3657 (TIPTQMTPLLLGFMACVMFTV), 3662–3682 (TFMSLFLLPVALCLTYANIVY), 3707–3727 (RTTHFDFGLYISLSFVLAIIV), 3735–3755 (MSNLALALCSGVMWFYTYVIG), 3784–3804 (LAKFISGLVFFYAPHLGFILP), and 3808–3828 (LVLLIYLGLGYMCTMYFGVFS). The interval 3603–3828 (ISYGFIHWLI…MCTMYFGVFS (226 aa)) is HD3. The 83-residue stretch at 3890-3972 (SKLTDLKCTS…DLFENSSVLQ (83 aa)) folds into the RdRp Nsp7 cofactor domain. One can recognise a RdRp Nsp8 cofactor domain in the interval 3973–4171 (ATLTEFSHLA…RSSSSAVKLQ (199 aa)). The 110-residue stretch at 4172–4281 (NNEIHPKGLK…GHIAATVRLQ (110 aa)) folds into the Nsp9 ssRNA-binding domain. Residues 4282–4420 (AGANTEFASN…DALRNNTVPQ (139 aa)) form the ExoN/MTase coactivator domain. Positions 4355, 4358, 4364, 4371, 4397, 4400, 4408, and 4410 each coordinate Zn(2+). Zinc fingers lie at residues 4355-4371 (CLYCRAHIEHPDVSGVC) and 4397-4410 (CNVCQYWVGYGCNC). The region spanning 4426–4683 (FLNRVRGSSV…AAETHKDCDF (258 aa)) is the NiRAN domain. Mn(2+)-binding residues include Asn4631 and Asp4640. The Nsp12 Interface domain occupies 4688 to 4786 (IEWPLLEYDY…MNMDFNIHRH (99 aa)). Zn(2+) contacts are provided by His4717, Cys4723, Cys4728, Cys4732, and Cys4909. A Nsp12 RNA-dependent RNA polymerase domain is found at 4787 to 5354 (RLALKELMMY…DLYSSPTTLQ (568 aa)). The interval 4789–5003 (ALKELMMYAA…HQKMLKSMAA (215 aa)) is rdRp Fingers N-ter. The rdRp Palm N-ter stretch occupies residues 5004-5042 (TRGATCVIGTTKFYGGWDFMLKTLYKDVESPHLMGWDYP). The region spanning 5034–5196 (PHLMGWDYPK…CYNSDYAAKG (163 aa)) is the RdRp catalytic domain. A rdRp Fingers C-ter region spans residues 5043-5101 (KCDRAMPNMCRILASLILARKHSTCCTNSDRFYRLANECAQVLSEYVLCGGGYYVKPGG). Zn(2+) is bound by residues His5064, Cys5067, and Cys5068. The segment at 5102–5237 (TSSGDATTAY…EKGPHEFCSQ (136 aa)) is rdRp Palm C-ter. Catalysis depends on residues Ser5181, Asp5182, and Asp5183. Residues 5238–5354 (HTLYIKDGDD…DLYSSPTTLQ (117 aa)) form a rdRp Thumb region. The region spanning 5355–5467 (AVGSCVVCHS…MEFNRLATCD (113 aa)) is the CV ZBD domain. Residues Cys5359, Cys5362, Cys5370, Cys5373, Cys5380, Cys5383, His5387, His5393, Cys5404, Cys5409, Cys5426, and His5429 each coordinate Zn(2+). Residues 5611 to 5792 (TVPEEFANHV…MCNLGPDIFL (182 aa)) enclose the (+)RNA virus helicase ATP-binding domain. 5636–5643 (GPPGTGKS) contacts ATP. One can recognise a (+)RNA virus helicase C-terminal domain in the interval 5793 to 5967 (SVCYRCPKEI…GLFKDCSRED (175 aa)). The ExoN domain maps to 6024 to 6239 (LFITRDEAIR…RCLAIYDCFI (216 aa)). Active-site residues include Asp6042, Glu6044, and Glu6143. The Zn(2+) site is built by Cys6159, Cys6162, Cys6178, His6181, His6209, Cys6213, and His6216. Catalysis depends on residues His6220 and Asp6225. Cys6231 lines the Zn(2+) pocket. An N7-MTase domain is found at 6248–6475 (YPYISHEQKL…NLWSTFVKVQ (228 aa)). 6283–6289 (DIGNPKG) is a binding site for S-adenosyl-L-methionine. The segment at 6361 to 6375 (CNGGSLYVNKHAFHT) is gpppA-binding. Positions 6399, 6421, 6432, and 6435 each coordinate Zn(2+). The 61-residue stretch at 6476 to 6536 (GLENIAFNVI…NVAFELYAKR (61 aa)) folds into the Nsp15 N-terminal oligomerization domain. Residues 6537 to 6658 (AVRSHPDLNL…LYKKVNNEFV (122 aa)) enclose the AV-Nsp11N/CoV-Nsp15M domain. The 140-residue stretch at 6675–6814 (TVLTPMEEDF…RDGKVQTFYP (140 aa)) folds into the NendoU domain. Active-site residues include His6705, His6720, Lys6760, Lys6863, Asp6947, Lys6987, and Glu7020. The Nidovirus-type SAM-dependent 2'-O-MTase domain occupies 6819 to 7113 (TNDWKPGLTM…TLNVSTDVLV (295 aa)).

The protein belongs to the coronaviruses polyprotein 1ab family. In terms of assembly, interacts with host PHB and PHB2. As to quaternary structure, interacts with papain-like protease nsp3 and non-structural protein 6. Monomer. Homodimer. Only the homodimer shows catalytic activity. In terms of assembly, interacts with nsp8 and nsp12 to form the replication-transcription complex (RTC): nsp12, nsp7, two subunits of nsp8, and up to two subunits of nsp13. As to quaternary structure, interacts with nsp7, nsp13 and nsp12 to form the replication-transcription complex (RTC): nsp12, nsp7, two subunits of nsp8, and up to two subunits of nsp13. Interacts with nsp12. In terms of assembly, interacts with proofreading exoribonuclease nsp14 and 2'-O-methyltransferase nsp16; these interactions enhance nsp14 and nsp16 enzymatic activities. As to quaternary structure, interacts with nsp7 and nsp8 to form the replication-transcription complex (RTC): nsp12, nsp7, two subunits of nsp8, and up to two subunits of nsp13. Interacts with nsp9. Interacts with nsp8 to form the replication-transcription complex (RTC): nsp12, nsp7, two subunits of nsp8, and up to two subunits of nsp13. Requires Mn(2+) as cofactor. It depends on Mg(2+) as a cofactor. Post-translationally, specific enzymatic cleavages in vivo by its own proteases yield mature proteins. 3CL-PRO and PL-PRO proteinases are autocatalytically processed.

The protein localises to the host membrane. Its subcellular location is the host cytoplasm. It is found in the host perinuclear region. It localises to the host endoplasmic reticulum-Golgi intermediate compartment. It catalyses the reaction RNA(n) + a ribonucleoside 5'-triphosphate = RNA(n+1) + diphosphate. The enzyme catalyses ATP + H2O = ADP + phosphate + H(+). It carries out the reaction Thiol-dependent hydrolysis of ester, thioester, amide, peptide and isopeptide bonds formed by the C-terminal Gly of ubiquitin (a 76-residue protein attached to proteins as an intracellular targeting signal).. The catalysed reaction is a 5'-end (N(7)-methyl 5'-triphosphoguanosine)-ribonucleoside in mRNA + S-adenosyl-L-methionine = a 5'-end (N(7)-methyl 5'-triphosphoguanosine)-(2'-O-methyl-ribonucleoside) in mRNA + S-adenosyl-L-homocysteine + H(+). It catalyses the reaction uridylyl-uridylyl-ribonucleotide-RNA = a 3'-end uridylyl-2',3'-cyclophospho-uridine-RNA + a 5'-end dephospho-ribonucleoside-RNA. The enzyme catalyses a 5'-end diphospho-ribonucleoside in mRNA + GTP + H(+) = a 5'-end (5'-triphosphoguanosine)-ribonucleoside in mRNA + diphosphate. It carries out the reaction a 5'-end (5'-triphosphoguanosine)-ribonucleoside in mRNA + S-adenosyl-L-methionine = a 5'-end (N(7)-methyl 5'-triphosphoguanosine)-ribonucleoside in mRNA + S-adenosyl-L-homocysteine. In terms of biological role, the replicase polyprotein of coronaviruses is a multifunctional protein: it contains the activities necessary for the transcription of negative stranded RNA, leader RNA, subgenomic mRNAs and progeny virion RNA as well as proteinases responsible for the cleavage of the polyprotein into functional products. Inhibits host translation by interacting with the 40S ribosomal subunit. The nsp1-40S ribosome complex further induces an endonucleolytic cleavage near the 5'UTR of host mRNAs, targeting them for degradation. Viral mRNAs are not susceptible to nsp1-mediated endonucleolytic RNA cleavage thanks to the presence of a 5'-end leader sequence and are therefore protected from degradation. By suppressing host gene expression, nsp1 facilitates efficient viral gene expression in infected cells and evasion from host immune response. Its function is as follows. May play a role in the modulation of host cell survival signaling pathway by interacting with host PHB and PHB2. Indeed, these two proteins play a role in maintaining the functional integrity of the mitochondria and protecting cells from various stresses. Functionally, responsible for the cleavages located at the N-terminus of the replicase polyprotein. In addition, PL-PRO possesses a deubiquitinating/deISGylating activity and processes both 'Lys-48'- and 'Lys-63'-linked polyubiquitin chains from cellular substrates. Participates together with nsp4 in the assembly of virally-induced cytoplasmic double-membrane vesicles necessary for viral replication. Antagonizes innate immune induction of type I interferon by blocking the phosphorylation, dimerization and subsequent nuclear translocation of host IRF3. Also prevents host NF-kappa-B signaling. In terms of biological role, participates in the assembly of virally-induced cytoplasmic double-membrane vesicles necessary for viral replication. Cleaves the C-terminus of replicase polyprotein at 11 sites. Recognizes substrates containing the core sequence [ILMVF]-Q-|-[SGACN]. Also able to bind an ADP-ribose-1''-phosphate (ADRP). Its function is as follows. Plays a role in the initial induction of autophagosomes from host endoplasmic reticulum. Later, limits the expansion of these phagosomes that are no longer able to deliver viral components to lysosomes. Functionally, forms a hexadecamer with nsp8 (8 subunits of each) that may participate in viral replication by acting as a primase. Alternatively, may synthesize substantially longer products than oligonucleotide primers. In terms of biological role, forms a hexadecamer with nsp7 (8 subunits of each) that may participate in viral replication by acting as a primase. Alternatively, may synthesize substantially longer products than oligonucleotide primers. Forms a primer, NSP9-pU, which is utilized by the polymerase for the initiation of RNA chains. Interacts with ribosome signal recognition particle RNA (SRP). Together with NSP8, suppress protein integration into the cell membrane, thereby disrupting host immune defenses. Its function is as follows. Plays a pivotal role in viral transcription by stimulating both nsp14 3'-5' exoribonuclease and nsp16 2'-O-methyltransferase activities. Therefore plays an essential role in viral mRNAs cap methylation. Functionally, RNA-directed RNA polymerase that catalyzes the transcription of viral genomic and subgenomic RNAs. Acts in complex with nsp7 and nsp8 to transcribe both the minus and positive strands of genomic RNA. The kinase-like NiRAN domain of NSP12 attaches one or more nucleotides to the amino terminus of NSP9, forming a covalent RNA-protein intermediate that serves as transcription/replication primer. Subgenomic RNAs (sgRNAs) are formed by discontinuous transcription: The polymerase has the ability to pause at transcription-regulating sequences (TRS) and jump to the leader TRS, resulting in a major deletion. This creates a series of subgenomic RNAs that are replicated, transcribed and translated. In addition, Nsp12 is a subunit of the viral RNA capping enzyme that catalyzes the RNA guanylyltransferase reaction for genomic and sub-genomic RNAs. Subsequently, the NiRAN domain transfers RNA to GDP, and forms the core cap structure GpppA-RNA. In terms of biological role, RNA-directed RNA polymerase that catalyzes the transcription of viral genomic and subgenomic RNAs. Acts in complex with nsp7 and nsp8 to transcribe both the minus and positive strands of genomic RNA. Subgenomic RNAs (sgRNAs) are formed by discontinuous transcription: The polymerase has the ability to pause at transcription-regulating sequences (TRS) and jump to the leader TRS, resulting in a major deletion. This creates a series of subgenomic RNAs that are replicated, transcribed and translated. In addition, Nsp12 is a subunit of the viral RNA capping enzyme that catalyzes the RNA guanylyltransferase reaction for genomic and sub-genomic RNAs. The kinase-like NiRAN domain of NSP12 transfers RNA to the amino terminus of NSP9, forming a covalent RNA-protein intermediate. Subsequently, the NiRAN domain transfers RNA to GDP, and forms the core cap structure GpppA-RNA. Multi-functional protein with a zinc-binding domain in N-terminus displaying RNA and DNA duplex-unwinding activities with 5' to 3' polarity. Activity of helicase is dependent on magnesium. Its function is as follows. Plays a role in viral RNA synthesis through two distinct activities. The N7-guanine methyltransferase activity plays a role in the formation of the cap structure GpppA-RNA. The proofreading exoribonuclease reduces the sensitivity of the virus to RNA mutagens during replication. This activity acts on both ssRNA and dsRNA in a 3'-5' direction. Functionally, plays a role in viral transcription/replication and prevents the simultaneous activation of host cell dsRNA sensors, such as MDA5/IFIH1, OAS, and PKR. Acts by degrading the 5'-polyuridines generated during replication of the poly(A) region of viral genomic and subgenomic RNAs. Catalyzes a two-step reaction in which a 2'3'-cyclic phosphate (2'3'-cP) is first generated by 2'-O transesterification, which is then hydrolyzed to a 3'-phosphate (3'-P). If not degraded, poly(U) RNA would hybridize with poly(A) RNA tails and activate host dsRNA sensors. In terms of biological role, methyltransferase that mediates mRNA cap 2'-O-ribose methylation to the 5'-cap structure of viral mRNAs. N7-methyl guanosine cap is a prerequisite for binding of nsp16. Therefore plays an essential role in viral mRNAs cap methylation which is essential to evade immune system. The protein is Replicase polyprotein 1ab (rep) of Tylonycteris pachypus (Lesser bamboo bat).